The chain runs to 769 residues: Gephyrin (769 aa).

The tract at residues 14 to 153 (QIRVGVLTVS…LPGSKKGSQE (140 aa)) is MPT Mo-transferase. The interval 140-349 (LIINLPGSKK…VDITKVARRH (210 aa)) is interaction with GABARAP. Disordered stretches follow at residues 181-232 (DELE…DSSS) and 260-299 (TASL…SKGV). Pro residues predominate over residues 187 to 199 (PSPPPPLSPPPTT). 2 positions are modified to phosphoserine: S188 and S194. Position 198 is a phosphothreonine (T198). The residue at position 200 (S200) is a Phosphoserine. A lipid anchor (S-palmitoyl cysteine) is attached at C212. Residues 261–286 (ASLSTTPSESPRAQATSRLSTASCPT) are compositionally biased toward polar residues. Residue S262 is modified to Phosphoserine. T265 and T266 each carry phosphothreonine. S268 and S270 each carry phosphoserine. C284 is lipidated: S-palmitoyl cysteine. Residues 327–769 (SSKENILRAS…VVDVMVIGRL (443 aa)) are MPT adenylyltransferase. S338 carries the post-translational modification Phosphoserine.

This sequence in the N-terminal section; belongs to the MoaB/Mog family. It in the C-terminal section; belongs to the MoeA family. As to quaternary structure, homotrimer, homodimer and homooligomer. Interacts with SRGAP2 (via SH3 domain). Interacts with GLRB. Interacts with GABARAP. Interacts with GABRA3. GABRA3 and GLRB occupy overlapping binding sites. Interacts with ARHGAP32; IQSEC3, INSYN1 and INSYN2A. Mg(2+) serves as cofactor. In terms of processing, palmitoylated. Palmitoylation is stimulated by GABA type A receptors activity. Palmitoylation by ZDHHC12 regulates clustering at synapses.

The protein resides in the postsynaptic cell membrane. Its subcellular location is the cell membrane. The protein localises to the cytoplasm. It localises to the cytosol. It is found in the cytoskeleton. The protein resides in the cell projection. Its subcellular location is the dendrite. The protein localises to the postsynaptic density. The catalysed reaction is molybdopterin + ATP + H(+) = adenylyl-molybdopterin + diphosphate. The enzyme catalyses adenylyl-molybdopterin + molybdate = Mo-molybdopterin + AMP + H(+). The protein operates within cofactor biosynthesis; molybdopterin biosynthesis. Its activity is regulated as follows. Inhibited by copper and tungsten. Microtubule-associated protein involved in membrane protein-cytoskeleton interactions. It is thought to anchor the inhibitory glycine receptor (GLYR) to subsynaptic microtubules. Acts as a major instructive molecule at inhibitory synapses, where it also clusters GABA type A receptors. Its function is as follows. Also has a catalytic activity and catalyzes two steps in the biosynthesis of the molybdenum cofactor. In the first step, molybdopterin is adenylated. Subsequently, molybdate is inserted into adenylated molybdopterin and AMP is released. This is Gephyrin (Gphn) from Mus musculus (Mouse).